A 400-amino-acid polypeptide reads, in one-letter code: Formate-dependent phosphoribosylglycinamide formyltransferase (400 aa).

Residues 22–23 (EL) and Glu82 contribute to the N(1)-(5-phospho-beta-D-ribosyl)glycinamide site. ATP-binding positions include Arg114, Lys155, 160-165 (SSGKGQ), 195-198 (EGFV), and Glu203. The region spanning 119–308 (RLAAEELGLS…EFALHARALL (190 aa)) is the ATP-grasp domain. Glu267 and Glu279 together coordinate Mg(2+). N(1)-(5-phospho-beta-D-ribosyl)glycinamide-binding positions include Asp286, Lys356, and 363 to 364 (RR).

Belongs to the PurK/PurT family. Homodimer.

The catalysed reaction is N(1)-(5-phospho-beta-D-ribosyl)glycinamide + formate + ATP = N(2)-formyl-N(1)-(5-phospho-beta-D-ribosyl)glycinamide + ADP + phosphate + H(+). It participates in purine metabolism; IMP biosynthesis via de novo pathway; N(2)-formyl-N(1)-(5-phospho-D-ribosyl)glycinamide from N(1)-(5-phospho-D-ribosyl)glycinamide (formate route): step 1/1. Functionally, involved in the de novo purine biosynthesis. Catalyzes the transfer of formate to 5-phospho-ribosyl-glycinamide (GAR), producing 5-phospho-ribosyl-N-formylglycinamide (FGAR). Formate is provided by PurU via hydrolysis of 10-formyl-tetrahydrofolate. This is Formate-dependent phosphoribosylglycinamide formyltransferase from Hahella chejuensis (strain KCTC 2396).